The following is a 95-amino-acid chain: Signal recognition particle 19 kDa protein (95 aa).

Belongs to the SRP19 family. Part of the signal recognition particle protein translocation system, which is composed of SRP and FtsY. Archaeal SRP consists of a 7S RNA molecule of 300 nucleotides and two protein subunits: SRP54 and SRP19.

The protein localises to the cytoplasm. Involved in targeting and insertion of nascent membrane proteins into the cytoplasmic membrane. Binds directly to 7S RNA and mediates binding of the 54 kDa subunit of the SRP. This Desulfurococcus amylolyticus (strain DSM 18924 / JCM 16383 / VKM B-2413 / 1221n) (Desulfurococcus kamchatkensis) protein is Signal recognition particle 19 kDa protein.